The chain runs to 316 residues: 4-hydroxy-3-methylbut-2-enyl diphosphate reductase (316 aa).

Cys-12 serves as a coordination point for [4Fe-4S] cluster. 2 residues coordinate (2E)-4-hydroxy-3-methylbut-2-enyl diphosphate: His-41 and His-74. His-41 and His-74 together coordinate dimethylallyl diphosphate. His-41 and His-74 together coordinate isopentenyl diphosphate. Cys-96 is a [4Fe-4S] cluster binding site. Residue His-124 participates in (2E)-4-hydroxy-3-methylbut-2-enyl diphosphate binding. His-124 serves as a coordination point for dimethylallyl diphosphate. His-124 provides a ligand contact to isopentenyl diphosphate. Catalysis depends on Glu-126, which acts as the Proton donor. Residue Thr-167 participates in (2E)-4-hydroxy-3-methylbut-2-enyl diphosphate binding. Residue Cys-197 participates in [4Fe-4S] cluster binding. Positions 225, 226, 227, and 269 each coordinate (2E)-4-hydroxy-3-methylbut-2-enyl diphosphate. Residues Ser-225, Ser-226, Asn-227, and Ser-269 each coordinate dimethylallyl diphosphate. Ser-225, Ser-226, Asn-227, and Ser-269 together coordinate isopentenyl diphosphate.

Belongs to the IspH family. In terms of assembly, homodimer. [4Fe-4S] cluster is required as a cofactor.

The catalysed reaction is isopentenyl diphosphate + 2 oxidized [2Fe-2S]-[ferredoxin] + H2O = (2E)-4-hydroxy-3-methylbut-2-enyl diphosphate + 2 reduced [2Fe-2S]-[ferredoxin] + 2 H(+). It catalyses the reaction dimethylallyl diphosphate + 2 oxidized [2Fe-2S]-[ferredoxin] + H2O = (2E)-4-hydroxy-3-methylbut-2-enyl diphosphate + 2 reduced [2Fe-2S]-[ferredoxin] + 2 H(+). Its pathway is isoprenoid biosynthesis; dimethylallyl diphosphate biosynthesis; dimethylallyl diphosphate from (2E)-4-hydroxy-3-methylbutenyl diphosphate: step 1/1. The protein operates within isoprenoid biosynthesis; isopentenyl diphosphate biosynthesis via DXP pathway; isopentenyl diphosphate from 1-deoxy-D-xylulose 5-phosphate: step 6/6. In terms of biological role, catalyzes the conversion of 1-hydroxy-2-methyl-2-(E)-butenyl 4-diphosphate (HMBPP) into a mixture of isopentenyl diphosphate (IPP) and dimethylallyl diphosphate (DMAPP). Acts in the terminal step of the DOXP/MEP pathway for isoprenoid precursor biosynthesis. In Salmonella paratyphi B (strain ATCC BAA-1250 / SPB7), this protein is 4-hydroxy-3-methylbut-2-enyl diphosphate reductase.